A 139-amino-acid polypeptide reads, in one-letter code: UPF0251 protein Csac_0224 (139 aa).

It belongs to the UPF0251 family.

The sequence is that of UPF0251 protein Csac_0224 from Caldicellulosiruptor saccharolyticus (strain ATCC 43494 / DSM 8903 / Tp8T 6331).